Here is a 359-residue protein sequence, read N- to C-terminus: NADPH HC-toxin reductase 2 (359 aa).

NADP(+)-binding positions include Arg39, 67 to 68 (DL), 87 to 89 (VAT), Tyr177, Lys181, 206 to 209 (LGLV), and Thr221. Lys181 acts as the Proton donor in catalysis.

This sequence belongs to the NAD(P)-dependent epimerase/dehydratase family.

Functionally, in tandem with Hm1, NADPH-dependent HC toxin reductase (HCTR), which inactivates HC toxin, a cyclic tetrapeptide produced by the fungus Cochliobolus carbonum to permit infection and acting as an inhibitor of host histone deacetylases (HDACs), thus conferring resistance against C.carbonum race 1 in resistant cultivars (e.g. cv. B73 and cv. Wisconsin 22). Catalyzes the production of 8-hydroxy derivative of HC-toxin via the reduction of the 8-keto group of 2-amino-9,10-epoxy-8-oxo-decanoic acid, an amino acid of the HC-toxin. This chain is NADPH HC-toxin reductase 2, found in Zea mays (Maize).